The sequence spans 326 residues: 3-dehydrosphinganine reductase TSC10A (326 aa).

Residues 1 to 7 are Lumenal-facing; sequence MAAISPL. The chain crosses the membrane as a helical span at residues 8–28; sequence FLLFLIPIIPLSLLAILALIV. Residues 29–264 are Cytoplasmic-facing; it reads RPRPIKIPIK…KAMDGIKAGN (236 aa). Residues G46, S48, S49, G50, R71, K75, and D97 each contribute to the NADPH site. The GXSXG signature appears at 46–50; the sequence is GGSSG. S174 (proton donor) is an active-site residue. Y188 (proton acceptor) is an active-site residue. Residues Y188 and K192 each contribute to the NADP(+) site. Residue K192 is the Lowers pKa of active site Tyr of the active site. Residues 265–285 form a helical membrane-spanning segment; it reads FTVSCNFEGFLLSLATTGMSP. The Lumenal portion of the chain corresponds to 286–288; sequence QRS. The helical transmembrane segment at 289–309 threads the bilayer; sequence FWLAFLEVITAGPIRLIALFF. At 310 to 326 the chain is on the cytoplasmic side; the sequence is QWDWYKAIEKWSKTKTK.

This sequence belongs to the short-chain dehydrogenases/reductases (SDR) family. Expressed in roots, leaves, stems, flowers and siliques.

It is found in the endoplasmic reticulum membrane. It catalyses the reaction sphinganine + NADP(+) = 3-oxosphinganine + NADPH + H(+). The protein operates within lipid metabolism; sphingolipid metabolism. In terms of biological role, catalyzes the reduction of 3'-oxosphinganine (3-ketodihydrosphingosine/KDS) to sphinganine (dihydrosphingosine/DHS), the second step of de novo sphingolipid biosynthesis. In plants, sphingolipids seems to play a critical role in mineral ion homeostasis, most likely through their involvement in the ion transport functionalities of membrane systems in the root. Lacks stereospecificity and can also produce L-threo-DHS in addition to D-erythro-DHS. The chain is 3-dehydrosphinganine reductase TSC10A (TSC10A) from Arabidopsis thaliana (Mouse-ear cress).